Here is a 645-residue protein sequence, read N- to C-terminus: MSLAASAGRGPGTMWSPTHVQVTVLQARGLRAKGPGGTSDAYAVIQVGKEKYATSVSERSLGAPVWREEATFELPPLLSSGAAPAAAATLQLTVLHRALLGLDKFLGRAEVDLRELHRDQGRRKKQWYTLKSKPGKKDKERGEIEVDIQFMRNNMTASMFDLSMKDKSRNPFGKLKDKIKGKNKDSASDTASAIVPSVTPSVDSDDESFSKDKKKKSKIKTLFSKSSLQKTPLSQSMSVLPTSKSDKVLLRAGDFQSQWDDDAHEDESSSASDVMSHKRTSSTDQQPNQSNFSLPKKEGLSFLGGLRSKNDSLSRSTVCINGNHVYMEQPEARSEIRESSPSNSPSPQGFRRKHLFSSTENLAARSPKEPGEGGGTSSDRRLSDSSTKDSMKSMSLPSYRPLTSGDNRESMSPANVEAARETKDSKKQESKKSSLLSLVTGKRDAAAKGSESEPLPTVSEKEKERKGALVEAQLREEDLMRRPEKDALPVASQWGSSLNPFEDVQISDPGATTESRSEPKPPVPAARVPQTKAVKPRPHPVKPMNTTATKIANSSLGTATIITENLISEALMKKYQPSDPAFAYAQLTHDELIQLVLKQKETISKKEFQVRELEDYIDNLLVRVMEETPNILRVPAQMGKKAGKM.

One can recognise a C2 domain in the interval 1-128 (MSLAASAGRG…DQGRRKKQWY (128 aa)). The segment covering 171–187 (PFGKLKDKIKGKNKDSA) has biased composition (basic and acidic residues). The disordered stretch occupies residues 171-215 (PFGKLKDKIKGKNKDSASDTASAIVPSVTPSVDSDDESFSKDKKK). Ser-186, Ser-204, Ser-208, and Ser-236 each carry phosphoserine. A disordered region spans residues 259–296 (WDDDAHEDESSSASDVMSHKRTSSTDQQPNQSNFSLPK). The span at 282–293 (STDQQPNQSNFS) shows a compositional bias: polar residues. A phosphoserine mark is found at Ser-301, Ser-316, Ser-340, Ser-342, Ser-344, Ser-346, Ser-357, Ser-358, and Ser-383. Residues 330–545 (PEARSEIRES…PRPHPVKPMN (216 aa)) form a disordered region. Basic and acidic residues-rich tracts occupy residues 378–391 (SDRRLSDSSTKDSM) and 418–432 (AARETKDSKKQESKK). Ser-434 carries the phosphoserine modification. Residues 459–487 (SEKEKERKGALVEAQLREEDLMRRPEKDA) show a composition bias toward basic and acidic residues. In terms of domain architecture, FIP-RBD spans 573–635 (KKYQPSDPAF…EETPNILRVP (63 aa)). Residues 581–645 (AFAYAQLTHD…AQMGKKAGKM (65 aa)) form a necessary for interaction with RAB4A and RAB11A, subcellular location and endosomal recycling region.

In terms of assembly, homooligomer. Interacts with RAB11A, RAB11B, RAB25, RAB4A and RAB14.

The protein localises to the recycling endosome. It is found in the cytoplasmic vesicle. In terms of biological role, a Rab11 effector protein involved in the endosomal recycling process. Also involved in controlling membrane trafficking along the phagocytic pathway and in phagocytosis. Interaction with RAB14 may function in the process of neurite formation. This is Rab11 family-interacting protein 1 (Rab11fip1) from Mus musculus (Mouse).